We begin with the raw amino-acid sequence, 880 residues long: Leucine-rich repeat-containing protein 66 (880 aa).

A helical membrane pass occupies residues 4–24 (LYFRVITIVIGLYFTGIMTNA). Asparagine 45 carries N-linked (GlcNAc...) asparagine glycosylation. 6 LRR repeats span residues 86–107 (KIKH…PFAY), 110–130 (ALEV…DLLS), 149–171 (LLKV…WKLK), 172–193 (SLQS…DFHN), 196–217 (QLEN…AFKD), and 220–241 (KLQV…MIIA). N-linked (GlcNAc...) asparagine glycosylation is present at asparagine 115. The segment at 319-368 (SKAERPQGGRHTGISTLGKKAKAGSGLRKKQRRLPRSVRSTRDVQAAGKK) is disordered. The span at 337–354 (KKAKAGSGLRKKQRRLPR) shows a compositional bias: basic residues. The helical transmembrane segment at 376–396 (ALAVCLSVFITFLVAFSLGAF) threads the bilayer. Disordered regions lie at residues 463-504 (PHPH…NDGA) and 679-746 (VTPA…SKDN). Over residues 483–493 (GSSQSPGQCGD) the composition is skewed to polar residues. The span at 697-707 (CELESDCDSDE) shows a compositional bias: acidic residues. Over residues 709 to 720 (SLFTLSSISSES) the composition is skewed to low complexity. A Phosphoserine modification is found at serine 723. Residues 737-746 (DESSGASKDN) are compositionally biased toward polar residues. N-linked (GlcNAc...) asparagine glycosylation occurs at asparagine 746. Serine 752 carries the post-translational modification Phosphoserine. A glycan (N-linked (GlcNAc...) asparagine) is linked at asparagine 756. Disordered regions lie at residues 764–816 (GKCK…PLGD) and 855–880 (TPPC…DILK). 2 stretches are compositionally biased toward basic and acidic residues: residues 788–800 (THLE…DRSE) and 865–880 (DPDK…DILK).

The protein localises to the membrane. The sequence is that of Leucine-rich repeat-containing protein 66 (LRRC66) from Homo sapiens (Human).